The following is a 366-amino-acid chain: Peptide chain release factor 1 (366 aa).

Gln230 bears the N5-methylglutamine mark. Basic and acidic residues-rich tracts occupy residues Ala283–Ala293 and Val315–Pro328. Residues Ala283–Gly335 are disordered.

Belongs to the prokaryotic/mitochondrial release factor family. In terms of processing, methylated by PrmC. Methylation increases the termination efficiency of RF1.

Its subcellular location is the cytoplasm. In terms of biological role, peptide chain release factor 1 directs the termination of translation in response to the peptide chain termination codons UAG and UAA. The protein is Peptide chain release factor 1 of Deinococcus deserti (strain DSM 17065 / CIP 109153 / LMG 22923 / VCD115).